The primary structure comprises 393 residues: Phosphoglycerate kinase (393 aa).

Substrate-binding positions include 21-23, Arg36, 59-62, Arg113, and Arg146; these read DLN and HLGR. Residues Lys197, Glu319, and 345–348 each bind ATP; that span reads GGDT.

Belongs to the phosphoglycerate kinase family. As to quaternary structure, monomer.

It localises to the cytoplasm. It carries out the reaction (2R)-3-phosphoglycerate + ATP = (2R)-3-phospho-glyceroyl phosphate + ADP. Its pathway is carbohydrate degradation; glycolysis; pyruvate from D-glyceraldehyde 3-phosphate: step 2/5. This Nitratidesulfovibrio vulgaris (strain DP4) (Desulfovibrio vulgaris) protein is Phosphoglycerate kinase.